The primary structure comprises 72 residues: UPF0346 protein GTNG_1419 (72 aa).

It belongs to the UPF0346 family.

In Geobacillus thermodenitrificans (strain NG80-2), this protein is UPF0346 protein GTNG_1419.